Reading from the N-terminus, the 396-residue chain is MSAEMTDLNFAEGRPLMTDKEDGITVLLQEYVTQEHDIETAHGIVHVTMCGTPKLNRPVILTYHDIGLNHKTCFNSLFNFEDMHEISQHFSVCHVDAPGQQEGAASFPAGYMYPSMDQLAEMLPGVVQQLGLRTVMGLGIGAGAYILTRFALNHPSMVEGLVLININPCAEGWMDWAATKISGWTNALPDMVISHLFSKDEVHSNPELVETYRQHILHDINQNNVQHFVKSYNSRRDLEIERPIPGTNAVTLKCPALLVVGDSSPAVDAVVECNSKLDPTKTTLLKMSDCGGFPQVIQPAKLAEAFKYFVQGMGYMPAASMTRLMRSRTGSAASSSSQDGNRSRSHTNEGSRSRSHTGDGNRSRAHTGDGNRSRSHTDTNNINSDQNSPKSMEVSC.

Residues 326 to 396 (RSRTGSAASS…NSPKSMEVSC (71 aa)) form a disordered region. Low complexity predominate over residues 327-340 (SRTGSAASSSSQDG). Repeat copies occupy residues 340 to 349 (GNRSRSHTNE), 350 to 359 (GSRSRSHTGD), 360 to 369 (GNRSRAHTGD), and 370 to 379 (GNRSRSHTDT). The tract at residues 340–379 (GNRSRSHTNEGSRSRSHTGDGNRSRAHTGDGNRSRSHTDT) is 4 X 10 AA tandem repeats of G-[NS]-R-S-R-[AS]-H-T-[DGN]-[DET]. Basic and acidic residues predominate over residues 346–377 (HTNEGSRSRSHTGDGNRSRAHTGDGNRSRSHT). The segment covering 378–390 (DTNNINSDQNSPK) has biased composition (polar residues).

The protein belongs to the NDRG family.

In terms of biological role, may be involved in pronephros development, after specification of the pronephros. The chain is Protein NDRG1-A (ndrg1-a) from Xenopus laevis (African clawed frog).